The chain runs to 462 residues: Transcript termination protein A18 (462 aa).

The 157-residue stretch at 99-255 folds into the Helicase ATP-binding domain; that stretch reads KCKEKRPLYT…NSIINFIKFS (157 aa). 112–119 contributes to the ATP binding site; that stretch reads LACGFGKT. The DEAH box motif lies at 205–208; the sequence is DEAH. The Helicase C-terminal domain maps to 308-459; sequence IVDKIIETFK…ATKLGFREVS (152 aa).

This sequence belongs to the helicase family. Poxviruses subfamily. In terms of assembly, interacts with G2. Might be part of a transcription complex composed at least of G2, A18, and H5.

Its subcellular location is the virion. Its function is as follows. DNA helicase which seems to act as a postreplicative transcription termination factor. Involved in ATP-dependent release of nascent RNA. Forms a stable complex with single-stranded DNA, and to a lesser extent RNA. This Vertebrata (FPV) protein is Transcript termination protein A18.